The chain runs to 93 residues: UPF0250 protein PA3998 (93 aa).

This sequence belongs to the UPF0250 family.

The sequence is that of UPF0250 protein PA3998 from Pseudomonas aeruginosa (strain ATCC 15692 / DSM 22644 / CIP 104116 / JCM 14847 / LMG 12228 / 1C / PRS 101 / PAO1).